We begin with the raw amino-acid sequence, 352 residues long: Tropomodulin-3 (352 aa).

A Phosphoserine modification is found at Ser25.

This sequence belongs to the tropomodulin family. Binds to the N-terminus of tropomyosin and to actin. Interacts with FLII. Ubiquitous.

The protein localises to the cytoplasm. Its subcellular location is the cytoskeleton. Blocks the elongation and depolymerization of the actin filaments at the pointed end. The Tmod/TM complex contributes to the formation of the short actin protofilament, which in turn defines the geometry of the membrane skeleton. This Homo sapiens (Human) protein is Tropomodulin-3 (TMOD3).